Reading from the N-terminus, the 297-residue chain is Transmembrane protein 178A (297 aa).

The first 25 residues, 1-25 (MEPRALVTALSLGLSLCSLGLLVTA), serve as a signal peptide directing secretion. Residues 26-179 (IFTDHWYETD…LLHLRRITAG (154 aa)) are Extracellular-facing. Residues 41–57 (ESCERSRAGADPPDQKN) show a composition bias toward basic and acidic residues. The segment at 41-86 (ESCERSRAGADPPDQKNRLMPLSHLPLRDSPPLGRRLLPGGPGRSD) is disordered. The segment covering 68 to 79 (RDSPPLGRRLLP) has biased composition (low complexity). N-linked (GlcNAc...) asparagine glycosylation is present at Asn158. Residues 180–200 (FLGMAVAVLLCGCIVATVSFF) traverse the membrane as a helical segment. At 201–208 (WEESLTQH) the chain is on the cytoplasmic side. The helical transmembrane segment at 209–229 (VAGLLFLMTGIFCTISLCTYA) threads the bilayer. Over 230–257 (ASVSYDLNRVPKLIYSLPHDVEHGYSWS) the chain is Extracellular. A helical membrane pass occupies residues 258–278 (IFCAWCSLGFIVAAGGLCIAY). The Cytoplasmic segment spans residues 279–297 (PFISRTKIAHLKSGRDSTV).

It belongs to the TMEM178 family. Interacts with STIM1.

It localises to the endoplasmic reticulum membrane. Functionally, acts as a negative regulator of osteoclast differentiation in basal and inflammatory conditions by regulating TNFSF11-induced Ca (2+) fluxes, thereby controlling the induction of NFATC1. In Rattus norvegicus (Rat), this protein is Transmembrane protein 178A (Tmem178a).